We begin with the raw amino-acid sequence, 376 residues long: 4-hydroxy-3-methylbut-2-en-1-yl diphosphate synthase (flavodoxin) (376 aa).

The [4Fe-4S] cluster site is built by C272, C275, C307, and E314.

The protein belongs to the IspG family. [4Fe-4S] cluster serves as cofactor.

It catalyses the reaction (2E)-4-hydroxy-3-methylbut-2-enyl diphosphate + oxidized [flavodoxin] + H2O + 2 H(+) = 2-C-methyl-D-erythritol 2,4-cyclic diphosphate + reduced [flavodoxin]. Its pathway is isoprenoid biosynthesis; isopentenyl diphosphate biosynthesis via DXP pathway; isopentenyl diphosphate from 1-deoxy-D-xylulose 5-phosphate: step 5/6. Its function is as follows. Converts 2C-methyl-D-erythritol 2,4-cyclodiphosphate (ME-2,4cPP) into 1-hydroxy-2-methyl-2-(E)-butenyl 4-diphosphate. The sequence is that of 4-hydroxy-3-methylbut-2-en-1-yl diphosphate synthase (flavodoxin) from Blochmanniella pennsylvanica (strain BPEN).